Reading from the N-terminus, the 113-residue chain is Large ribosomal subunit protein uL24 (113 aa).

This sequence belongs to the universal ribosomal protein uL24 family. Part of the 50S ribosomal subunit.

In terms of biological role, one of two assembly initiator proteins, it binds directly to the 5'-end of the 23S rRNA, where it nucleates assembly of the 50S subunit. Its function is as follows. One of the proteins that surrounds the polypeptide exit tunnel on the outside of the subunit. This is Large ribosomal subunit protein uL24 from Micrococcus luteus (Micrococcus lysodeikticus).